Reading from the N-terminus, the 396-residue chain is E3 ubiquitin-protein transferase MAEA (396 aa).

The interval 1-124 (MAVQESAVQL…AAASVWKRKR (124 aa)) is extracellular and involved in cell to cell contact. T28 bears the Phosphothreonine mark. The LisH domain maps to 121–153 (KRKRMDRMMVEHLLRCGYYNTAVKLARQSGIED). The CTLH domain occupies 159–216 (MFLTAKEVEESLERRETATCLAWCHDNKSRLRKMKSCLEFSLRIQEFIELIRQNKRLD). The segment at 314–381 (CPVCSRSLNK…QDDKVVCPRT (68 aa)) adopts an RING-Gid-type zinc-finger fold.

In terms of assembly, identified in the CTLH complex that contains GID4, RANBP9 and/or RANBP10, MKLN1, MAEA, RMND5A (or alternatively its paralog RMND5B), GID8, ARMC8, WDR26 and YPEL5. Within this complex, MAEA, RMND5A (or alternatively its paralog RMND5B), GID8, WDR26, and RANBP9 and/or RANBP10 form the catalytic core, while GID4, MKLN1, ARMC8 and YPEL5 have ancillary roles. Interacts with F-actin. Post-translationally, autoubiquitinated as component of the CTLH E3 ubiquitin-protein ligase complex (in vitro).

Its subcellular location is the cytoplasm. The protein resides in the nucleus. It is found in the nucleoplasm. The protein localises to the nucleus matrix. It localises to the cell membrane. Its subcellular location is the cytoskeleton. It carries out the reaction S-ubiquitinyl-[E2 ubiquitin-conjugating enzyme]-L-cysteine + [acceptor protein]-L-lysine = [E2 ubiquitin-conjugating enzyme]-L-cysteine + N(6)-ubiquitinyl-[acceptor protein]-L-lysine.. Its function is as follows. Core component of the CTLH E3 ubiquitin-protein ligase complex that selectively accepts ubiquitin from UBE2H and mediates ubiquitination and subsequent proteasomal degradation of the transcription factor HBP1. MAEA and RMND5A are both required for catalytic activity of the CTLH E3 ubiquitin-protein ligase complex. MAEA is required for normal cell proliferation. The CTLH E3 ubiquitin-protein ligase complex is not required for the degradation of enzymes involved in gluconeogenesis, such as FBP1. Plays a role in erythroblast enucleation during erythrocyte maturation and in the development of mature macrophages. Mediates the attachment of erythroid cell to mature macrophages; this MAEA-mediated contact inhibits erythroid cell apoptosis. Participates in erythroblastic island formation, which is the functional unit of definitive erythropoiesis. Associates with F-actin to regulate actin distribution in erythroblasts and macrophages. May contribute to nuclear architecture and cells division events. The chain is E3 ubiquitin-protein transferase MAEA (MAEA) from Macaca fascicularis (Crab-eating macaque).